A 153-amino-acid chain; its full sequence is RNA-binding protein OPG065 (153 aa).

A Z-binding domain is found at 1-33; it reads MEKREVNKALYDLQRSAMVYSSNDTPPRWSTTM. Positions 22 to 34 are enriched in polar residues; it reads SNDTPPRWSTTMD. The interval 22 to 44 is disordered; sequence SNDTPPRWSTTMDADTRPTDSDA. Residues 80–147 form the DRBM domain; sequence NPVTVINEYC…AKLAVDKLLS (68 aa).

Belongs to the orthopoxvirus OPG065 family. In terms of assembly, interacts with host G1P2/ISG15. Interacts with host EIF2AK2/PKR. Interacts with host ZBP1.

Its function is as follows. RNA-binding protein that plays a role in the inhibition of multiple cellular antiviral responses activated by double-stranded RNA (dsRNA), such as inhibition of PKR activation, necroptosis, and IFN-mediated antiviral activities. Recognizes and binds Z-RNA structures via its Z-binding domain and dsRNA via its DRBM domain: RNA-binding activity is required to escape host ZBP1-dependent necroptosis. Mechanistically, the Z-binding domain binds Z-RNAs that are produced during vaccinia virus infection, thereby competing with Z-RNA detection by host ZBP1, suppressing ZBP1-dependent necroptosis. Acts as a key inhibitor of the interferon response by blocking the phosphorylation and subsequent activation of IRF3 and IRF7 kinases that are required for interferon-alpha gene expression. Inhibits NF-kappa-B activation and the ubiquitin-like protein ISG15, which is an early antiviral protein. The binding with host ISG15 subsequently blocks host ISGylation. The sequence is that of RNA-binding protein OPG065 (OPG065) from Monkeypox virus.